The chain runs to 214 residues: Thiamine-phosphate synthase (214 aa).

Residues 40 to 44 (QLREK) and N72 each bind 4-amino-2-methyl-5-(diphosphooxymethyl)pyrimidine. Mg(2+)-binding residues include D73 and D92. S110 is a binding site for 4-amino-2-methyl-5-(diphosphooxymethyl)pyrimidine. 137 to 139 (SPT) lines the 2-[(2R,5Z)-2-carboxy-4-methylthiazol-5(2H)-ylidene]ethyl phosphate pocket. Residue K140 coordinates 4-amino-2-methyl-5-(diphosphooxymethyl)pyrimidine. 2-[(2R,5Z)-2-carboxy-4-methylthiazol-5(2H)-ylidene]ethyl phosphate-binding positions include G167 and 185-186 (IS).

It belongs to the thiamine-phosphate synthase family. The cofactor is Mg(2+).

It carries out the reaction 2-[(2R,5Z)-2-carboxy-4-methylthiazol-5(2H)-ylidene]ethyl phosphate + 4-amino-2-methyl-5-(diphosphooxymethyl)pyrimidine + 2 H(+) = thiamine phosphate + CO2 + diphosphate. The enzyme catalyses 2-(2-carboxy-4-methylthiazol-5-yl)ethyl phosphate + 4-amino-2-methyl-5-(diphosphooxymethyl)pyrimidine + 2 H(+) = thiamine phosphate + CO2 + diphosphate. It catalyses the reaction 4-methyl-5-(2-phosphooxyethyl)-thiazole + 4-amino-2-methyl-5-(diphosphooxymethyl)pyrimidine + H(+) = thiamine phosphate + diphosphate. It participates in cofactor biosynthesis; thiamine diphosphate biosynthesis; thiamine phosphate from 4-amino-2-methyl-5-diphosphomethylpyrimidine and 4-methyl-5-(2-phosphoethyl)-thiazole: step 1/1. In terms of biological role, condenses 4-methyl-5-(beta-hydroxyethyl)thiazole monophosphate (THZ-P) and 2-methyl-4-amino-5-hydroxymethyl pyrimidine pyrophosphate (HMP-PP) to form thiamine monophosphate (TMP). This Wolinella succinogenes (strain ATCC 29543 / DSM 1740 / CCUG 13145 / JCM 31913 / LMG 7466 / NCTC 11488 / FDC 602W) (Vibrio succinogenes) protein is Thiamine-phosphate synthase.